Here is a 135-residue protein sequence, read N- to C-terminus: uncharacterized protein (135 aa).

A disordered region spans residues 1 to 80 (MRSSSLPGAR…QRGSCASANA (80 aa)). Over residues 54–65 (GARGGGRRGWGG) the composition is skewed to gly residues.

This is an uncharacterized protein from Homo sapiens (Human).